The sequence spans 399 residues: Yellow-related salivary protein M10 (399 aa).

The N-terminal stretch at 1–18 is a signal peptide; it reads MKFILSVLALASFQHVFC. Residues Asn29 and Asn83 are each glycosylated (N-linked (GlcNAc...) asparagine).

Belongs to the major royal jelly protein family. Salivary gland (at protein level).

It is found in the secreted. Its function is as follows. Probably modulates blood feeding of sand flies on vertebrate species by binding and sequestering different mediators involved in the host response. Functions as a chemoattractant for host neutrophils; likely acts through a G-protein-coupled receptor and effect is dependent on calcium influx and phosphatidylinositol 3-kinases (PI3K) activity. In terms of biological role, (Microbial infection) Probably enhances infection caused by Leishmania species in the host through augmentation of host neutrophil recruitment into the skin. This is Yellow-related salivary protein M10 from Phlebotomus duboscqi (Sandfly).